A 444-amino-acid chain; its full sequence is Methylenetetrahydrofolate--tRNA-(uracil-5-)-methyltransferase TrmFO (444 aa).

Residue 10 to 15 (GAGLAG) participates in FAD binding.

The protein belongs to the MnmG family. TrmFO subfamily. The cofactor is FAD.

The protein localises to the cytoplasm. It catalyses the reaction uridine(54) in tRNA + (6R)-5,10-methylene-5,6,7,8-tetrahydrofolate + NADH + H(+) = 5-methyluridine(54) in tRNA + (6S)-5,6,7,8-tetrahydrofolate + NAD(+). The catalysed reaction is uridine(54) in tRNA + (6R)-5,10-methylene-5,6,7,8-tetrahydrofolate + NADPH + H(+) = 5-methyluridine(54) in tRNA + (6S)-5,6,7,8-tetrahydrofolate + NADP(+). Catalyzes the folate-dependent formation of 5-methyl-uridine at position 54 (M-5-U54) in all tRNAs. The polypeptide is Methylenetetrahydrofolate--tRNA-(uracil-5-)-methyltransferase TrmFO (Streptococcus pneumoniae serotype 2 (strain D39 / NCTC 7466)).